The following is a 305-amino-acid chain: tRNA-cytidine(32) 2-sulfurtransferase (305 aa).

The interval 1 to 20 (MTAVLPLPQPLADPAPRDPR) is disordered. The short motif at 59-64 (SGGKDS) is the PP-loop motif element. [4Fe-4S] cluster is bound by residues C134, C137, and C225. Residues 282–293 (DAPSDVDPDPSA) are compositionally biased toward low complexity. Residues 282–305 (DAPSDVDPDPSAWLSASHAPHDSD) form a disordered region.

Belongs to the TtcA family. In terms of assembly, homodimer. Mg(2+) serves as cofactor. Requires [4Fe-4S] cluster as cofactor.

The protein localises to the cytoplasm. The enzyme catalyses cytidine(32) in tRNA + S-sulfanyl-L-cysteinyl-[cysteine desulfurase] + AH2 + ATP = 2-thiocytidine(32) in tRNA + L-cysteinyl-[cysteine desulfurase] + A + AMP + diphosphate + H(+). The protein operates within tRNA modification. Catalyzes the ATP-dependent 2-thiolation of cytidine in position 32 of tRNA, to form 2-thiocytidine (s(2)C32). The sulfur atoms are provided by the cysteine/cysteine desulfurase (IscS) system. The polypeptide is tRNA-cytidine(32) 2-sulfurtransferase (Xanthomonas euvesicatoria pv. vesicatoria (strain 85-10) (Xanthomonas campestris pv. vesicatoria)).